Consider the following 311-residue polypeptide: MSNPSAPPPYEDRNPLYPGPPPPGGYGQPSVLPGGYPAYPGYPQPGYGHPAGYPQPMPPTHPMPMNYGPGHGYDGEERAVSDSFGPGEWDDRKVRHTFIRKVYSIISVQLLITVAIIAIFTFVEPVSAFVRRNVAVYYVSYAVFVVTYLILACCQGPRRRFPWNIILLTLFTFAMGFMTGTISSMYQTKAVIIAMIITAVVSISVTIFCFQTKVDFTSCTGLFCVLGIVLLVTGIVTSIVLYFQYVYWLHMLYAALGAICFTLFLAYDTQLVLGNRKHTISPEDYITGALQIYTDIIYIFTFVLQLMGDRN.

Disordered regions lie at residues 1-37 (MSNP…GGYP) and 50-72 (PAGY…PGHG). Pro residues predominate over residues 53–62 (YPQPMPPTHP). 2 positions are modified to phosphoserine: S81 and S83. The next 7 helical transmembrane spans lie at 110-130 (LLIT…SAFV), 134-154 (VAVY…LACC), 165-185 (IILL…ISSM), 190-210 (AVII…IFCF), 221-241 (GLFC…SIVL), 246-266 (VYWL…LFLA), and 286-306 (ITGA…VLQL).

It belongs to the BI1 family. LFG subfamily.

The protein resides in the membrane. Its subcellular location is the lysosome membrane. The protein localises to the endosome membrane. Functionally, negatively regulates aortic matrix metalloproteinase-9 (MMP9) production and may play a protective role in vascular remodeling. The chain is Protein lifeguard 3 (TMBIM1) from Homo sapiens (Human).